The sequence spans 134 residues: Putative pre-16S rRNA nuclease (134 aa).

The protein belongs to the YqgF nuclease family.

It is found in the cytoplasm. In terms of biological role, could be a nuclease involved in processing of the 5'-end of pre-16S rRNA. This Helicobacter pylori (strain ATCC 700392 / 26695) (Campylobacter pylori) protein is Putative pre-16S rRNA nuclease.